Reading from the N-terminus, the 955-residue chain is UPF0182 protein PMT_0755 (955 aa).

A run of 9 helical transmembrane segments spans residues Leu-25 to Phe-45, Trp-58 to Trp-78, Leu-107 to Leu-127, Ile-146 to Asn-166, Cys-178 to Ile-198, Phe-214 to Ile-234, Cys-264 to Leu-284, Ser-313 to Gln-333, and Leu-340 to Val-360.

Belongs to the UPF0182 family.

The protein localises to the cell membrane. The sequence is that of UPF0182 protein PMT_0755 from Prochlorococcus marinus (strain MIT 9313).